Consider the following 481-residue polypeptide: GTPase Obg (481 aa).

In terms of domain architecture, Obg spans threonine 2–valine 159. An OBG-type G domain is found at alanine 160–alanine 330. GTP contacts are provided by residues glycine 166 to serine 173, phenylalanine 191 to valine 195, aspartate 212 to glycine 215, asparagine 282 to aspartate 285, and serine 311 to alanine 313. Residues serine 173 and threonine 193 each coordinate Mg(2+). Residues proline 348–proline 426 form the OCT domain. The disordered stretch occupies residues aspartate 440–glutamate 481. Acidic residues predominate over residues glutamate 469–glutamate 481.

Belongs to the TRAFAC class OBG-HflX-like GTPase superfamily. OBG GTPase family. Monomer. Mg(2+) serves as cofactor.

It is found in the cytoplasm. In terms of biological role, an essential GTPase which binds GTP, GDP and possibly (p)ppGpp with moderate affinity, with high nucleotide exchange rates and a fairly low GTP hydrolysis rate. Plays a role in control of the cell cycle, stress response, ribosome biogenesis and in those bacteria that undergo differentiation, in morphogenesis control. The chain is GTPase Obg from Salinispora arenicola (strain CNS-205).